We begin with the raw amino-acid sequence, 206 residues long: Large ribosomal subunit protein uL4 (206 aa).

Positions G47 to Q75 are disordered.

It belongs to the universal ribosomal protein uL4 family. As to quaternary structure, part of the 50S ribosomal subunit.

Its function is as follows. One of the primary rRNA binding proteins, this protein initially binds near the 5'-end of the 23S rRNA. It is important during the early stages of 50S assembly. It makes multiple contacts with different domains of the 23S rRNA in the assembled 50S subunit and ribosome. Functionally, forms part of the polypeptide exit tunnel. In Clostridium botulinum (strain ATCC 19397 / Type A), this protein is Large ribosomal subunit protein uL4.